The sequence spans 337 residues: MKVRVGINGFGRMGRLALRAAWDWPELEFVHINEIKGGAVAAAHLLKFDSVHGRWTPEVEAEGERVLIDGTPLSFSEYGKPDDVPWEDFGVDLVLECSGKFRTPATLDPYFKRGVQKVIVAAPVKEEALNIVMGVNDYLYEPEKHHLLTAASCTTNCLAPVVKVIHEGLGIKHGIITTIHDNTNTQTLVDAPHKDLRRARATSLSLIPTTTGSATAIALIYPELKGKLNGIAVRVPLLNASLTDCVFEVTRPTTVEEINALLKAASEQAPLQGILGYEERPLVSIDYKDDPRSSIIDALSTMVVDETQVKILAWYDNEWGYVNRMVELARKVALSLK.

Residues 12–13 (RM) and Lys-80 each bind NAD(+). Residues 152–154 (SCT) and Thr-183 each bind D-glyceraldehyde 3-phosphate. Cys-153 acts as the Nucleophile in catalysis. An NAD(+)-binding site is contributed by Asn-184. D-glyceraldehyde 3-phosphate contacts are provided by residues Arg-198, 211–212 (TG), and Arg-234. Asn-317 provides a ligand contact to NAD(+).

The protein belongs to the glyceraldehyde-3-phosphate dehydrogenase family. In terms of assembly, homotetramer.

The protein localises to the cytoplasm. It carries out the reaction D-glyceraldehyde 3-phosphate + phosphate + NAD(+) = (2R)-3-phospho-glyceroyl phosphate + NADH + H(+). It functions in the pathway carbohydrate degradation; glycolysis; pyruvate from D-glyceraldehyde 3-phosphate: step 1/5. Its pathway is carbohydrate biosynthesis; gluconeogenesis. Functionally, catalyzes the oxidative phosphorylation of glyceraldehyde 3-phosphate (G3P) to 1,3-bisphosphoglycerate (BPG) using the cofactor NAD. The first reaction step involves the formation of a hemiacetal intermediate between G3P and a cysteine residue, and this hemiacetal intermediate is then oxidized to a thioester, with concomitant reduction of NAD to NADH. The reduced NADH is then exchanged with the second NAD, and the thioester is attacked by a nucleophilic inorganic phosphate to produce BPG. The sequence is that of Glyceraldehyde-3-phosphate dehydrogenase 3 (gap3) from Nostoc sp. (strain PCC 7120 / SAG 25.82 / UTEX 2576).